The chain runs to 115 residues: NADH-ubiquinone oxidoreductase chain 3 (115 aa).

3 helical membrane passes run 4–24 (MLIL…AFWL), 55–75 (FFLV…LLPL), and 86–106 (MLMT…AYEW).

It belongs to the complex I subunit 3 family. Core subunit of respiratory chain NADH dehydrogenase (Complex I) which is composed of 45 different subunits. Interacts with TMEM186. Interacts with TMEM242.

The protein resides in the mitochondrion inner membrane. The enzyme catalyses a ubiquinone + NADH + 5 H(+)(in) = a ubiquinol + NAD(+) + 4 H(+)(out). Core subunit of the mitochondrial membrane respiratory chain NADH dehydrogenase (Complex I) which catalyzes electron transfer from NADH through the respiratory chain, using ubiquinone as an electron acceptor. Essential for the catalytic activity of complex I. This chain is NADH-ubiquinone oxidoreductase chain 3, found in Microtus pennsylvanicus (Meadow vole).